The sequence spans 545 residues: CTP synthase (545 aa).

Positions 1–266 are amidoligase domain; the sequence is MTTNYIFVTG…DDYICKRFSL (266 aa). Residue S14 participates in CTP binding. Residue S14 coordinates UTP. Residues 15–20 and D72 contribute to the ATP site; that span reads SLGKGI. Mg(2+)-binding residues include D72 and E140. Residues 147 to 149, 187 to 192, and K223 contribute to the CTP site; these read DIE and KTKPTQ. Residues 187 to 192 and K223 each bind UTP; that span reads KTKPTQ. ATP is bound at residue 239–241; sequence KDV. Residues 291–542 form the Glutamine amidotransferase type-1 domain; that stretch reads TIGMIGKYVE…VKAAGDYQKR (252 aa). G352 contributes to the L-glutamine binding site. C379 functions as the Nucleophile; for glutamine hydrolysis in the catalytic mechanism. L-glutamine contacts are provided by residues 380-383, E403, and R470; that span reads LGMQ. Active-site residues include H515 and E517.

It belongs to the CTP synthase family. As to quaternary structure, homotetramer.

It catalyses the reaction UTP + L-glutamine + ATP + H2O = CTP + L-glutamate + ADP + phosphate + 2 H(+). It carries out the reaction L-glutamine + H2O = L-glutamate + NH4(+). The catalysed reaction is UTP + NH4(+) + ATP = CTP + ADP + phosphate + 2 H(+). It functions in the pathway pyrimidine metabolism; CTP biosynthesis via de novo pathway; CTP from UDP: step 2/2. With respect to regulation, allosterically activated by GTP, when glutamine is the substrate; GTP has no effect on the reaction when ammonia is the substrate. The allosteric effector GTP functions by stabilizing the protein conformation that binds the tetrahedral intermediate(s) formed during glutamine hydrolysis. Inhibited by the product CTP, via allosteric rather than competitive inhibition. Its function is as follows. Catalyzes the ATP-dependent amination of UTP to CTP with either L-glutamine or ammonia as the source of nitrogen. Regulates intracellular CTP levels through interactions with the four ribonucleotide triphosphates. The protein is CTP synthase of Yersinia pseudotuberculosis serotype O:1b (strain IP 31758).